A 556-amino-acid chain; its full sequence is Arginine--tRNA ligase (556 aa).

The 'HIGH' region motif lies at 133 to 143 (ANPTGPIHIGH).

Belongs to the class-I aminoacyl-tRNA synthetase family. Monomer.

It is found in the cytoplasm. The enzyme catalyses tRNA(Arg) + L-arginine + ATP = L-arginyl-tRNA(Arg) + AMP + diphosphate. In Dehalococcoides mccartyi (strain CBDB1), this protein is Arginine--tRNA ligase.